The chain runs to 363 residues: DNA replication and repair protein RecF (363 aa).

Residue 30 to 37 (GPNGSGKT) participates in ATP binding.

Belongs to the RecF family.

Its subcellular location is the cytoplasm. In terms of biological role, the RecF protein is involved in DNA metabolism; it is required for DNA replication and normal SOS inducibility. RecF binds preferentially to single-stranded, linear DNA. It also seems to bind ATP. The polypeptide is DNA replication and repair protein RecF (Chlorobium limicola (strain DSM 245 / NBRC 103803 / 6330)).